A 229-amino-acid polypeptide reads, in one-letter code: Cytochrome c oxidase subunit 2 (229 aa).

The Mitochondrial intermembrane portion of the chain corresponds to 1–14 (MANPTHLGFQDAMS). A helical transmembrane segment spans residues 15–45 (PLMEELLYFHDHTLMILFLISSLVFYMIFAL). Topologically, residues 46-59 (LFPKLYYPNTSDVQ) are mitochondrial matrix. A helical transmembrane segment spans residues 60 to 87 (EVEVIWTVLPAIVLISIALPSLRTLYLM). Residues 88–229 (DETNNPCLTI…QLWLEDSILS (142 aa)) lie on the Mitochondrial intermembrane side of the membrane. Cu cation contacts are provided by H161, C196, E198, C200, H204, and M207. E198 provides a ligand contact to Mg(2+).

Belongs to the cytochrome c oxidase subunit 2 family. Component of the cytochrome c oxidase (complex IV, CIV), a multisubunit enzyme composed of 14 subunits. The complex is composed of a catalytic core of 3 subunits MT-CO1, MT-CO2 and MT-CO3, encoded in the mitochondrial DNA, and 11 supernumerary subunits COX4I, COX5A, COX5B, COX6A, COX6B, COX6C, COX7A, COX7B, COX7C, COX8 and NDUFA4, which are encoded in the nuclear genome. The complex exists as a monomer or a dimer and forms supercomplexes (SCs) in the inner mitochondrial membrane with NADH-ubiquinone oxidoreductase (complex I, CI) and ubiquinol-cytochrome c oxidoreductase (cytochrome b-c1 complex, complex III, CIII), resulting in different assemblies (supercomplex SCI(1)III(2)IV(1) and megacomplex MCI(2)III(2)IV(2)). Found in a complex with TMEM177, COA6, COX18, COX20, SCO1 and SCO2. Interacts with TMEM177 in a COX20-dependent manner. Interacts with COX20. Interacts with COX16. Requires Cu cation as cofactor.

It is found in the mitochondrion inner membrane. It catalyses the reaction 4 Fe(II)-[cytochrome c] + O2 + 8 H(+)(in) = 4 Fe(III)-[cytochrome c] + 2 H2O + 4 H(+)(out). In terms of biological role, component of the cytochrome c oxidase, the last enzyme in the mitochondrial electron transport chain which drives oxidative phosphorylation. The respiratory chain contains 3 multisubunit complexes succinate dehydrogenase (complex II, CII), ubiquinol-cytochrome c oxidoreductase (cytochrome b-c1 complex, complex III, CIII) and cytochrome c oxidase (complex IV, CIV), that cooperate to transfer electrons derived from NADH and succinate to molecular oxygen, creating an electrochemical gradient over the inner membrane that drives transmembrane transport and the ATP synthase. Cytochrome c oxidase is the component of the respiratory chain that catalyzes the reduction of oxygen to water. Electrons originating from reduced cytochrome c in the intermembrane space (IMS) are transferred via the dinuclear copper A center (CU(A)) of subunit 2 and heme A of subunit 1 to the active site in subunit 1, a binuclear center (BNC) formed by heme A3 and copper B (CU(B)). The BNC reduces molecular oxygen to 2 water molecules using 4 electrons from cytochrome c in the IMS and 4 protons from the mitochondrial matrix. The protein is Cytochrome c oxidase subunit 2 (MT-CO2) of Alligator mississippiensis (American alligator).